An 845-amino-acid polypeptide reads, in one-letter code: Dynein axonemal assembly factor 5 (845 aa).

HEAT repeat units lie at residues 47 to 84, 138 to 175, 180 to 217, 260 to 297, 332 to 369, 523 to 561, 674 to 715, and 766 to 803; these read DVFD…SLPP, ECYP…LADT, PFTE…HMDA, SFFE…QYFN, QRSL…HAEA, NFGQ…LDAA, SESV…MSVE, and AIVK…SHPE.

Belongs to the DNAAF5 family. Expressed in testis.

The protein resides in the cytoplasm. It localises to the dynein axonemal particle. Cytoplasmic protein involved in the delivery of the dynein machinery to the motile cilium. It is required for the assembly of the axonemal dynein inner and outer arms, two structures attached to the peripheral outer doublet A microtubule of the axoneme, that play a crucial role in cilium motility. The sequence is that of Dynein axonemal assembly factor 5 from Drosophila melanogaster (Fruit fly).